We begin with the raw amino-acid sequence, 606 residues long: Aspartate--tRNA(Asp/Asn) ligase (606 aa).

Glutamate 187 provides a ligand contact to L-aspartate. The aspartate stretch occupies residues 211 to 214; the sequence is QQFK. L-aspartate-binding residues include arginine 233 and histidine 461. 233–235 provides a ligand contact to ATP; that stretch reads RDE. Position 495 (glutamate 495) interacts with ATP. Arginine 502 serves as a coordination point for L-aspartate. 547–550 provides a ligand contact to ATP; that stretch reads GLDR.

The protein belongs to the class-II aminoacyl-tRNA synthetase family. Type 1 subfamily. As to quaternary structure, homodimer.

It is found in the cytoplasm. It carries out the reaction tRNA(Asx) + L-aspartate + ATP = L-aspartyl-tRNA(Asx) + AMP + diphosphate. In terms of biological role, aspartyl-tRNA synthetase with relaxed tRNA specificity since it is able to aspartylate not only its cognate tRNA(Asp) but also tRNA(Asn). Reaction proceeds in two steps: L-aspartate is first activated by ATP to form Asp-AMP and then transferred to the acceptor end of tRNA(Asp/Asn). The polypeptide is Aspartate--tRNA(Asp/Asn) ligase (Chlorobium phaeobacteroides (strain DSM 266 / SMG 266 / 2430)).